The following is a 953-amino-acid chain: Isoleucine--tRNA ligase (953 aa).

Residues P61–H71 carry the 'HIGH' region motif. E564 contacts L-isoleucyl-5'-AMP. The 'KMSKS' region signature appears at K605–S609. Residue K608 coordinates ATP. Zn(2+) is bound by residues C922, C925, C942, and C945.

It belongs to the class-I aminoacyl-tRNA synthetase family. IleS type 1 subfamily. In terms of assembly, monomer. Zn(2+) is required as a cofactor.

It localises to the cytoplasm. The catalysed reaction is tRNA(Ile) + L-isoleucine + ATP = L-isoleucyl-tRNA(Ile) + AMP + diphosphate. In terms of biological role, catalyzes the attachment of isoleucine to tRNA(Ile). As IleRS can inadvertently accommodate and process structurally similar amino acids such as valine, to avoid such errors it has two additional distinct tRNA(Ile)-dependent editing activities. One activity is designated as 'pretransfer' editing and involves the hydrolysis of activated Val-AMP. The other activity is designated 'posttransfer' editing and involves deacylation of mischarged Val-tRNA(Ile). In Thermosynechococcus vestitus (strain NIES-2133 / IAM M-273 / BP-1), this protein is Isoleucine--tRNA ligase.